The following is a 239-amino-acid chain: MRLNAEFLSQVPSFISPLKETELDLRWYQIPIIENLGVLRDVHDAIDFTDNDIRYLGNFPRMKRLQTLLCGNNRITAIAPDIGKVLPNLKTLSLAQNHLQEIADLDPLASCPQLTNLSCIDNPVAQKQYYRLYLIWRIPSLHILDFERVRRNERLRAEEVFGQIQNPTEIASSIMGVKSRVFDLAALVQSHPEANSPITTGYTLTPEEREKIKEAIKNASSIAEINRLEAMLLEGKIPK.

LRR repeat units lie at residues 19–40 (KETELDLRWYQIPIIENLGVLR), 42–63 (VHDAIDFTDNDIRYLGNFPRMK), 64–85 (RLQTLLCGNNRITAIAPDIGKV), and 88–109 (NLKTLSLAQNHLQEIADLDPLA). The LRRCT domain occupies 122–160 (NPVAQKQYYRLYLIWRIPSLHILDFERVRRNERLRAEEV).

The protein belongs to the U2 small nuclear ribonucleoprotein A family. In terms of assembly, belongs to the 40S cdc5-associated complex (or cwf complex), a spliceosome sub-complex reminiscent of a late-stage spliceosome composed of the U2, U5 and U6 snRNAs and at least brr2, cdc5, cwf2/prp3, cwf3/syf1, cwf4/syf3, cwf5/ecm2, spp42/cwf6, cwf7/spf27, cwf8, cwf9, cwf10, cwf11, cwf12, prp45/cwf13, cwf14, cwf15, cwf16, cwf17, cwf18, cwf19, cwf20, cwf21, cwf22, cwf23, cwf24, cwf25, cwf26, cyp7/cwf27, cwf28, cwf29/ist3, lea1, msl1, prp5/cwf1, prp10, prp12/sap130, prp17, prp22, sap61, sap62, sap114, sap145, slu7, smb1, smd1, smd3, smf1, smg1 and syf2.

It is found in the nucleus. In terms of biological role, involved in pre-mRNA splicing. This protein is associated with sn-RNP U2. It helps the A' protein to bind stem loop IV of U2 snRNA. In Schizosaccharomyces pombe (strain 972 / ATCC 24843) (Fission yeast), this protein is U2 small nuclear ribonucleoprotein A' (lea1).